Here is a 299-residue protein sequence, read N- to C-terminus: Fructose-1,6-bisphosphatase class 1 (299 aa).

Residues Glu-79, Asp-98, Leu-100, and Asp-101 each coordinate Mg(2+). Residues 101-104 (DGSS), Tyr-207, and Lys-238 each bind substrate. A Mg(2+)-binding site is contributed by Glu-244.

It belongs to the FBPase class 1 family. As to quaternary structure, homotetramer. Mg(2+) serves as cofactor.

Its subcellular location is the cytoplasm. It catalyses the reaction beta-D-fructose 1,6-bisphosphate + H2O = beta-D-fructose 6-phosphate + phosphate. It participates in carbohydrate biosynthesis; gluconeogenesis. The chain is Fructose-1,6-bisphosphatase class 1 from Campylobacter curvus (strain 525.92).